The primary structure comprises 357 residues: DNA replication and repair protein RecF (357 aa).

ATP is bound at residue 30-37 (GANGSGKT).

It belongs to the RecF family.

The protein resides in the cytoplasm. Functionally, the RecF protein is involved in DNA metabolism; it is required for DNA replication and normal SOS inducibility. RecF binds preferentially to single-stranded, linear DNA. It also seems to bind ATP. The chain is DNA replication and repair protein RecF from Cronobacter sakazakii (strain ATCC BAA-894) (Enterobacter sakazakii).